The following is a 123-amino-acid chain: Large ribosomal subunit protein bL12 (123 aa).

This sequence belongs to the bacterial ribosomal protein bL12 family. As to quaternary structure, homodimer. Part of the ribosomal stalk of the 50S ribosomal subunit. Forms a multimeric L10(L12)X complex, where L10 forms an elongated spine to which 2 to 4 L12 dimers bind in a sequential fashion. Binds GTP-bound translation factors.

Its function is as follows. Forms part of the ribosomal stalk which helps the ribosome interact with GTP-bound translation factors. Is thus essential for accurate translation. The protein is Large ribosomal subunit protein bL12 of Clostridium kluyveri (strain NBRC 12016).